The sequence spans 325 residues: Tetraacyldisaccharide 4'-kinase (325 aa).

54–61 serves as a coordination point for ATP; sequence SVGGTGKT.

It belongs to the LpxK family.

It catalyses the reaction a lipid A disaccharide + ATP = a lipid IVA + ADP + H(+). Its pathway is glycolipid biosynthesis; lipid IV(A) biosynthesis; lipid IV(A) from (3R)-3-hydroxytetradecanoyl-[acyl-carrier-protein] and UDP-N-acetyl-alpha-D-glucosamine: step 6/6. In terms of biological role, transfers the gamma-phosphate of ATP to the 4'-position of a tetraacyldisaccharide 1-phosphate intermediate (termed DS-1-P) to form tetraacyldisaccharide 1,4'-bis-phosphate (lipid IVA). The protein is Tetraacyldisaccharide 4'-kinase of Rickettsia akari (strain Hartford).